The primary structure comprises 93 residues: WAP four-disulfide core domain protein 13 (93 aa).

An N-terminal signal peptide occupies residues 1-22 (MKPVLPLQFLVVFCLALQLVPG). Residues 24-73 (PKQRVLKYILEPPPCISAPENCTHLCTMQEDCEKGFQCCSSFCGIVCSSE) form the WAP; atypical domain. Cystine bridges form between cysteine 45–cysteine 66, cysteine 49–cysteine 61, and cysteine 55–cysteine 70.

It localises to the secreted. Putative acid-stable proteinase inhibitor. The protein is WAP four-disulfide core domain protein 13 (WFDC13) of Homo sapiens (Human).